Here is a 541-residue protein sequence, read N- to C-terminus: Chaperonin GroEL (541 aa).

Residues 29–32 (TLGP), 86–90 (DGTTT), glycine 413, and aspartate 495 contribute to the ATP site.

This sequence belongs to the chaperonin (HSP60) family. As to quaternary structure, forms a cylinder of 14 subunits composed of two heptameric rings stacked back-to-back. Interacts with the co-chaperonin GroES.

The protein localises to the cytoplasm. It catalyses the reaction ATP + H2O + a folded polypeptide = ADP + phosphate + an unfolded polypeptide.. Its function is as follows. Together with its co-chaperonin GroES, plays an essential role in assisting protein folding. The GroEL-GroES system forms a nano-cage that allows encapsulation of the non-native substrate proteins and provides a physical environment optimized to promote and accelerate protein folding. This Thermoanaerobacter pseudethanolicus (strain ATCC 33223 / 39E) (Clostridium thermohydrosulfuricum) protein is Chaperonin GroEL.